The following is a 389-amino-acid chain: Sulfate adenylyltransferase (389 aa).

Belongs to the sulfate adenylyltransferase family.

It carries out the reaction sulfate + ATP + H(+) = adenosine 5'-phosphosulfate + diphosphate. It functions in the pathway sulfur metabolism; hydrogen sulfide biosynthesis; sulfite from sulfate: step 1/3. The sequence is that of Sulfate adenylyltransferase from Deinococcus geothermalis (strain DSM 11300 / CIP 105573 / AG-3a).